The sequence spans 339 residues: Glyceraldehyde-3-phosphate dehydrogenase (339 aa).

Residues 12-13 (RI), Asp39, Arg84, and Ser127 each bind NAD(+). Residues 157–159 (SCT), Thr188, Arg203, 216–217 (TG), and Arg239 contribute to the D-glyceraldehyde 3-phosphate site. The active-site Nucleophile is the Cys158. Residue Asn320 participates in NAD(+) binding.

This sequence belongs to the glyceraldehyde-3-phosphate dehydrogenase family. As to quaternary structure, homotetramer.

It localises to the cytoplasm. It catalyses the reaction D-glyceraldehyde 3-phosphate + phosphate + NAD(+) = (2R)-3-phospho-glyceroyl phosphate + NADH + H(+). It participates in carbohydrate degradation; glycolysis; pyruvate from D-glyceraldehyde 3-phosphate: step 1/5. Functionally, catalyzes the oxidative phosphorylation of glyceraldehyde 3-phosphate (G3P) to 1,3-bisphosphoglycerate (BPG) using the cofactor NAD. The first reaction step involves the formation of a hemiacetal intermediate between G3P and a cysteine residue, and this hemiacetal intermediate is then oxidized to a thioester, with concomitant reduction of NAD to NADH. The reduced NADH is then exchanged with the second NAD, and the thioester is attacked by a nucleophilic inorganic phosphate to produce BPG. In Mycobacterium leprae (strain TN), this protein is Glyceraldehyde-3-phosphate dehydrogenase (gapA).